The following is a 431-amino-acid chain: Arginine biosynthesis bifunctional protein ArgJ, mitochondrial (431 aa).

Substrate contacts are provided by Thr-174, Lys-200, Thr-211, Glu-297, Asn-426, and Thr-431. Residue Thr-211 is the Nucleophile of the active site.

This sequence belongs to the ArgJ family. In terms of assembly, heterodimer of an alpha and a beta chain. In terms of processing, the alpha and beta chains are autoproteolytically processed from a single precursor protein within the mitochondrion.

It localises to the mitochondrion matrix. The enzyme catalyses N(2)-acetyl-L-ornithine + L-glutamate = N-acetyl-L-glutamate + L-ornithine. The catalysed reaction is L-glutamate + acetyl-CoA = N-acetyl-L-glutamate + CoA + H(+). The protein operates within amino-acid biosynthesis; L-arginine biosynthesis; L-ornithine and N-acetyl-L-glutamate from L-glutamate and N(2)-acetyl-L-ornithine (cyclic): step 1/1. It functions in the pathway amino-acid biosynthesis; L-arginine biosynthesis; N(2)-acetyl-L-ornithine from L-glutamate: step 1/4. Catalyzes two activities which are involved in the cyclic version of arginine biosynthesis: the synthesis of acetylglutamate from glutamate and acetyl-CoA, and of ornithine by transacetylation between acetylornithine and glutamate. This is Arginine biosynthesis bifunctional protein ArgJ, mitochondrial from Yarrowia lipolytica (strain CLIB 122 / E 150) (Yeast).